We begin with the raw amino-acid sequence, 465 residues long: ATP synthase subunit beta (465 aa).

ATP is bound at residue 153-160 (GGAGVGKT).

The protein belongs to the ATPase alpha/beta chains family. In terms of assembly, F-type ATPases have 2 components, CF(1) - the catalytic core - and CF(0) - the membrane proton channel. CF(1) has five subunits: alpha(3), beta(3), gamma(1), delta(1), epsilon(1). CF(0) has three main subunits: a(1), b(2) and c(9-12). The alpha and beta chains form an alternating ring which encloses part of the gamma chain. CF(1) is attached to CF(0) by a central stalk formed by the gamma and epsilon chains, while a peripheral stalk is formed by the delta and b chains.

The protein localises to the cell membrane. The catalysed reaction is ATP + H2O + 4 H(+)(in) = ADP + phosphate + 5 H(+)(out). Its function is as follows. Produces ATP from ADP in the presence of a proton gradient across the membrane. The catalytic sites are hosted primarily by the beta subunits. This is ATP synthase subunit beta from Clostridium perfringens (strain ATCC 13124 / DSM 756 / JCM 1290 / NCIMB 6125 / NCTC 8237 / Type A).